Here is a 318-residue protein sequence, read N- to C-terminus: Cytochrome f (318 aa).

The N-terminal stretch at 1 to 32 (MQNKNNYNWLKEWVIRSFLLLTLLTWPSVSNA) is a signal peptide. Heme contacts are provided by Y33, C53, C56, and H57. The helical transmembrane segment at 284–304 (IQGLLLFFASVVLAQIFLVLK) threads the bilayer.

It belongs to the cytochrome f family. The 4 large subunits of the cytochrome b6-f complex are cytochrome b6, subunit IV (17 kDa polypeptide, petD), cytochrome f and the Rieske protein, while the 4 small subunits are PetG, PetL, PetM and PetN. The complex functions as a dimer. Requires heme as cofactor.

It localises to the plastid. Its subcellular location is the chloroplast thylakoid membrane. Its function is as follows. Component of the cytochrome b6-f complex, which mediates electron transfer between photosystem II (PSII) and photosystem I (PSI), cyclic electron flow around PSI, and state transitions. The polypeptide is Cytochrome f (Angiopteris evecta (Mule's foot fern)).